The following is a 348-amino-acid chain: Trace amine-associated receptor 9 (348 aa).

Residues 1-33 (MTSDFSPEPPMELCYENVNGSCIKSSYAPWPRA) are Extracellular-facing. Residue asparagine 19 is glycosylated (N-linked (GlcNAc...) asparagine). 2 disulfides stabilise this stretch: cysteine 22/cysteine 186 and cysteine 105/cysteine 190. The helical transmembrane segment at 34–58 (ILYGVLGLGALLAVFGNLLVIIAIL) threads the bilayer. Residues 59–68 (HFKQLHTPTN) are Cytoplasmic-facing. Residues 69-90 (FLVASLACADFLVGVTVMPFST) traverse the membrane as a helical segment. Residues 91-105 (VRSVESCWYFGESYC) are Extracellular-facing. The helical transmembrane segment at 106–128 (KFHTCFDTSFCFASLFHLCCISI) threads the bilayer. Spermidine is bound by residues aspartate 112 and threonine 113. Residues 129–148 (DRYIAVTDPLTYPTKFTVSV) are Cytoplasmic-facing. The helical transmembrane segment at 149-170 (SGLCIALSWFFSVTYSFSIFYT) threads the bilayer. The Extracellular segment spans residues 171-196 (GANEEGIEELVVALTCVGGCQAPLNQ). Positions 174-187 (EEGIEELVVALTCV) are extracellular Loop 2 (ECL2). A helical transmembrane segment spans residues 197–218 (NWVLLCFLLFFLPTVVMVFLYG). Residues 219 to 256 (RIFLVAKYQARKIEGTANQAQASSESYKERVAKRERKA) lie on the Cytoplasmic side of the membrane. The helical transmembrane segment at 257-280 (AKTLGIAMAAFLVSWLPYIIDAVI) threads the bilayer. Topologically, residues 281 to 293 (DAYMNFITPAYVY) are extracellular. The helical transmembrane segment at 294–314 (EILVWCVYYNSAMNPLIYAFF) threads the bilayer. Over 315 to 348 (YPWFRKAIKLIVSGKVFRADSSTTNLFSEEAGAG) the chain is Cytoplasmic.

It belongs to the G-protein coupled receptor 1 family. In terms of tissue distribution, specifically expressed in neurons of the olfactory epithelium.

It localises to the cell membrane. Olfactory receptor specific for trace amines, such as triethylamine, N,N-dimethylcyclohexylamine (DMCHA), beta-phenylethylamine (beta-PEA), cadaverine (CAD) and polyamines such as spermine and spermidine. Trace amine compounds are enriched in animal body fluids and act on trace amine-associated receptors (TAARs) to elicit both intraspecific and interspecific innate behaviors. Trace amine-binding causes a conformation change that triggers signaling via G(s)-class of G alpha proteins (GNAL or GNAS). In mature olfactory sensory neurons, Taar9 is coupled with GNAL/G(olf)G alpha protein and mediates activation of adenylate cyclase activity to activate cAMP signaling and eventually transmit odorant signals to achieve membrane depolarization. In immature olfactory sensory neurons, Taar9 is coupled with GNAS/G(s) G alpha proteins. The protein is Trace amine-associated receptor 9 of Mus musculus (Mouse).